Here is a 152-residue protein sequence, read N- to C-terminus: Histone H2B.9 (152 aa).

Composition is skewed to basic and acidic residues over residues Met-1 to Glu-16 and Glu-34 to Lys-52. The tract at residues Met-1–Lys-59 is disordered. An N6-acetyllysine mark is found at Lys-7 and Lys-35. A Glycyl lysine isopeptide (Lys-Gly) (interchain with G-Cter in ubiquitin) cross-link involves residue Lys-148.

Belongs to the histone H2B family. The nucleosome is a histone octamer containing two molecules each of H2A, H2B, H3 and H4 assembled in one H3-H4 heterotetramer and two H2A-H2B heterodimers. The octamer wraps approximately 147 bp of DNA. Post-translationally, can be acetylated to form H2BK6ac and H2BK33ac. In terms of processing, monoubiquitinated by BRE1 to form H2BK143ub1 and deubiquitinated by UBP26. Required for heterochromatic histone H3 di- and trimethylation at H3K4me. May give a specific tag for epigenetic transcriptional activation.

The protein localises to the nucleus. It is found in the chromosome. Core component of nucleosome. Nucleosomes wrap and compact DNA into chromatin, limiting DNA accessibility to the cellular machineries which require DNA as a template. Histones thereby play a central role in transcription regulation, DNA repair, DNA replication and chromosomal stability. DNA accessibility is regulated via a complex set of post-translational modifications of histones, also called histone code, and nucleosome remodeling. The sequence is that of Histone H2B.9 (H2B.9) from Oryza sativa subsp. indica (Rice).